An 880-amino-acid polypeptide reads, in one-letter code: Alanine--tRNA ligase (880 aa).

H567, H571, C669, and H673 together coordinate Zn(2+).

This sequence belongs to the class-II aminoacyl-tRNA synthetase family. The cofactor is Zn(2+).

It is found in the cytoplasm. The catalysed reaction is tRNA(Ala) + L-alanine + ATP = L-alanyl-tRNA(Ala) + AMP + diphosphate. Catalyzes the attachment of alanine to tRNA(Ala) in a two-step reaction: alanine is first activated by ATP to form Ala-AMP and then transferred to the acceptor end of tRNA(Ala). Also edits incorrectly charged Ser-tRNA(Ala) and Gly-tRNA(Ala) via its editing domain. In Bacillus thuringiensis subsp. konkukian (strain 97-27), this protein is Alanine--tRNA ligase.